A 492-amino-acid polypeptide reads, in one-letter code: GPI alpha-1,6-mannosyltransferase 2 (492 aa).

Residues 1-13 (MGLLDPSQKEVLK) are Cytoplasmic-facing. Residues 14–34 (FAVSCRILTLVLQALFNIIIP) form a helical membrane-spanning segment. The Lumenal segment spans residues 35–77 (DHHADAFSPPRLAPSGSVDQLVEALLGGLSRWDAEHFLFIAEH). A helical transmembrane segment spans residues 78–98 (GYLYEHNFAFFPGFPLALLMG). Topologically, residues 99–113 (TELLRPLQGLLSERS) are cytoplasmic. A helical membrane pass occupies residues 114–134 (CLLVSVALLNSLFSVLAAVAL). Residues 135 to 136 (HD) lie on the Lumenal side of the membrane. Residues 137 to 157 (LGCLVLHCPRQAFCAALLFCL) traverse the membrane as a helical segment. Residues 158–161 (SPAN) are Cytoplasmic-facing. The chain crosses the membrane as a helical span at residues 162–182 (VFLAAGYSEALFAFLTFSAMG). Over 183 to 192 (QLERGRGWAS) the chain is Lumenal. The helical transmembrane segment at 193 to 213 (GLLFALAAGVRSNGLVSVGFL) threads the bilayer. Residues 214–234 (LHSQCRGFCSSLVVLDPLKGL) are Cytoplasmic-facing. The helical transmembrane segment at 235–255 (VKLMASLCLSVLTVSLPFALF) threads the bilayer. Residues 256–327 (QYYAYTQFCF…RYYELRQVPN (72 aa)) are Lumenal-facing. Residues 328-348 (FLLATPVTVLVVWATWTYVTA) traverse the membrane as a helical segment. Residues 349–378 (HPWLCLTLGLQRTKDRESLEKPHPGFLSAK) are Cytoplasmic-facing. Residues 379 to 399 (VFVYLVHAAALLAFGGLCMHV) traverse the membrane as a helical segment. Topologically, residues 400–468 (QVLTRLLGSS…NWKTCSPVTK (69 aa)) are lumenal. The chain crosses the membrane as a helical span at residues 469–489 (CILVYFLTYWLLGLIMHCNFL). Topologically, residues 490–492 (PWT) are cytoplasmic.

Belongs to the PIGV family. Post-translationally, not N-glycosylated.

The protein localises to the endoplasmic reticulum membrane. The protein operates within glycolipid biosynthesis; glycosylphosphatidylinositol-anchor biosynthesis. Its function is as follows. Alpha-1,6-mannosyltransferase that catalyzes the transfer of the second mannose, via an alpha-1,6 bond, from a dolichol-phosphate-mannose (Dol-P-Man) to the alpha-D-Man-(1-&gt;4)-alpha-D-GlcN-(1-&gt;6)-(1-radyl,2-acyl-sn-glycero-3-phospho)-2-acyl-inositol (also termed H2) intermediate to generate an alpha-D-Man-(1-&gt;6)-alpha-D-Man-(1-&gt;4)-alpha-D-GlcN-(1-&gt;6)-(1-radyl,2-acyl-sn-glycero-3-phospho)-2-acyl-inositol (also termed H3) and participates in the seventh step of the glycosylphosphatidylinositol-anchor biosynthesis. Also transfers the second mannose on a 2-PEtn-alpha-D-Man-(1-&gt;4)-alpha-D-GlcN-(1-&gt;6)-(1-radyl,2-acyl-sn-glycero-3-phospho)-2-acyl-inositol (also termed H5). The chain is GPI alpha-1,6-mannosyltransferase 2 from Rattus norvegicus (Rat).